The primary structure comprises 234 residues: Phosphoribosylaminoimidazole-succinocarboxamide synthase (234 aa).

This sequence belongs to the SAICAR synthetase family.

It carries out the reaction 5-amino-1-(5-phospho-D-ribosyl)imidazole-4-carboxylate + L-aspartate + ATP = (2S)-2-[5-amino-1-(5-phospho-beta-D-ribosyl)imidazole-4-carboxamido]succinate + ADP + phosphate + 2 H(+). The protein operates within purine metabolism; IMP biosynthesis via de novo pathway; 5-amino-1-(5-phospho-D-ribosyl)imidazole-4-carboxamide from 5-amino-1-(5-phospho-D-ribosyl)imidazole-4-carboxylate: step 1/2. This is Phosphoribosylaminoimidazole-succinocarboxamide synthase from Clostridium botulinum (strain Okra / Type B1).